Here is a 473-residue protein sequence, read N- to C-terminus: Membrane protein TMS1 (473 aa).

The Cytoplasmic segment spans residues 1–6; sequence MGAVIS. A helical membrane pass occupies residues 7-29; the sequence is LPVSMAGSFVASCFGGCCSNLVT. Residues 30–38 lie on the Vacuolar side of the membrane; that stretch reads KTASSLGSS. The helical transmembrane segment at 39-61 threads the bilayer; the sequence is SLGTRLLYAVWLLLNSLISWVSY. The Cytoplasmic portion of the chain corresponds to 62–81; the sequence is SANKSILWPGKTCTGTGECG. A helical transmembrane segment spans residues 82–104; sequence FFTVHRLNFALGCLHLILALVLT. At 105–118 the chain is on the vacuolar side; the sequence is GVKSTNDVRAALQN. The helical transmembrane segment at 119–138 threads the bilayer; the sequence is SWWSLKFILYLCLIVLSFVI. Topologically, residues 139–144 are cytoplasmic; it reads PNDFYI. Residues 145–167 form a helical membrane-spanning segment; sequence FFSKWVSVPSGAIFILVGLILLV. Over 168–194 the chain is Vacuolar; that stretch reads DFAHEWAETCISHVESEDEDSSFWQRF. The helical transmembrane segment at 195–217 threads the bilayer; the sequence is LVLGTTSMYTASIIMTVVMYVMF. The Cytoplasmic portion of the chain corresponds to 218–228; sequence CHQQCNMNQTA. The helical transmembrane segment at 229-246 threads the bilayer; that stretch reads VTVNLILTVITLVLSVNP. Residues 247–295 lie on the Vacuolar side of the membrane; that stretch reads KIQEANPKSGLAQSSMVSVYCTYLTMSAMSSEPDDKMCNPLVRSSGTRK. The chain crosses the membrane as a helical span at residues 296 to 318; the sequence is FSIILGSLFTFIAIAYTTTRAAA. The Cytoplasmic portion of the chain corresponds to 319–398; sequence NSAFQGTNTN…DDERTGTKYN (80 aa). Residues 399–421 form a helical membrane-spanning segment; the sequence is YTLFHVIFFLATQWIAILLTINV. The Vacuolar segment spans residues 422-435; it reads TQDDVGDFIPVGRT. The chain crosses the membrane as a helical span at residues 436–458; it reads YFYSWVKIVSAWICYALYGWTVV. Residues 459 to 473 lie on the Cytoplasmic side of the membrane; sequence APAIMPDRFDYENYY.

This sequence belongs to the TDE1 family.

Its subcellular location is the membrane. The polypeptide is Membrane protein TMS1 (TMS1) (Saccharomyces cerevisiae (strain ATCC 204508 / S288c) (Baker's yeast)).